The primary structure comprises 209 residues: Probable phosphatase C1687.21 (209 aa).

Residue His-8 is the Tele-phosphohistidine intermediate of the active site. The active-site Proton donor/acceptor is Glu-82.

This sequence belongs to the phosphoglycerate mutase family. BPG-dependent PGAM subfamily.

Its subcellular location is the cytoplasm. It is found in the nucleus. The protein is Probable phosphatase C1687.21 of Schizosaccharomyces pombe (strain 972 / ATCC 24843) (Fission yeast).